The following is a 166-amino-acid chain: ATP synthase subunit b (166 aa).

Residues 8-28 traverse the membrane as a helical segment; it reads FSFGLFFWQALILVILILLLV.

This sequence belongs to the ATPase B chain family. As to quaternary structure, F-type ATPases have 2 components, F(1) - the catalytic core - and F(0) - the membrane proton channel. F(1) has five subunits: alpha(3), beta(3), gamma(1), delta(1), epsilon(1). F(0) has three main subunits: a(1), b(2) and c(10-14). The alpha and beta chains form an alternating ring which encloses part of the gamma chain. F(1) is attached to F(0) by a central stalk formed by the gamma and epsilon chains, while a peripheral stalk is formed by the delta and b chains.

The protein localises to the cell inner membrane. Its function is as follows. F(1)F(0) ATP synthase produces ATP from ADP in the presence of a proton or sodium gradient. F-type ATPases consist of two structural domains, F(1) containing the extramembraneous catalytic core and F(0) containing the membrane proton channel, linked together by a central stalk and a peripheral stalk. During catalysis, ATP synthesis in the catalytic domain of F(1) is coupled via a rotary mechanism of the central stalk subunits to proton translocation. In terms of biological role, component of the F(0) channel, it forms part of the peripheral stalk, linking F(1) to F(0). In Flavobacterium johnsoniae (strain ATCC 17061 / DSM 2064 / JCM 8514 / BCRC 14874 / CCUG 350202 / NBRC 14942 / NCIMB 11054 / UW101) (Cytophaga johnsonae), this protein is ATP synthase subunit b.